We begin with the raw amino-acid sequence, 155 residues long: Small ribosomal subunit protein uS7cz/uS7cy (155 aa).

The protein belongs to the universal ribosomal protein uS7 family. Part of the 30S ribosomal subunit.

The protein localises to the plastid. It localises to the chloroplast. In terms of biological role, one of the primary rRNA binding proteins, it binds directly to 16S rRNA where it nucleates assembly of the head domain of the 30S subunit. In Vitis vinifera (Grape), this protein is Small ribosomal subunit protein uS7cz/uS7cy (rps7-A).